The sequence spans 201 residues: Large ribosomal subunit protein uL4 (201 aa).

The segment at 42-67 (GNSAQKTRSEVSGGGKKPWNQKGTGR) is disordered.

It belongs to the universal ribosomal protein uL4 family. Part of the 50S ribosomal subunit.

In terms of biological role, one of the primary rRNA binding proteins, this protein initially binds near the 5'-end of the 23S rRNA. It is important during the early stages of 50S assembly. It makes multiple contacts with different domains of the 23S rRNA in the assembled 50S subunit and ribosome. Its function is as follows. Forms part of the polypeptide exit tunnel. The protein is Large ribosomal subunit protein uL4 of Legionella pneumophila (strain Corby).